A 402-amino-acid polypeptide reads, in one-letter code: Hyaluronan and proteoglycan link protein 4 (402 aa).

The signal sequence occupies residues 1–29 (MVCARAALGPGALWAAAWGVLLLTAPAGA). In terms of domain architecture, Ig-like C2-type spans 46–161 (SVVVQTAPGQ…DAGMVKLDLE (116 aa)). Disulfide bonds link Cys-68-Cys-143, Cys-185-Cys-266, Cys-209-Cys-230, Cys-293-Cys-363, and Cys-318-Cys-339. Asn-132 is a glycosylation site (N-linked (GlcNAc...) asparagine). Link domains are found at residues 163 to 268 (VVFP…FCFT) and 273 to 365 (GRVF…YCYR).

It belongs to the HAPLN family. As to expression, expressed predominantly in brain.

It is found in the secreted. The protein resides in the extracellular space. The protein localises to the extracellular matrix. In terms of biological role, essential for the proper localization of brevican (BCAN), mainly as a perineuronal nets (PNNs)-type deposition in the brainstem and cerebellum thereby playing a key role in the formation and structural organization of PNNs. Contributes to the formation and transmission of inhibitory GABAergic synapses between Purkinje cells and deep cerebellar nuclei neurons. This is Hyaluronan and proteoglycan link protein 4 (HAPLN4) from Homo sapiens (Human).